The chain runs to 261 residues: Small ribosomal subunit protein uS2 (261 aa).

Residue Ser-2 is modified to N-acetylserine. The disordered stretch occupies residues 214–261 (ATEDIKTDDVEEAPAADAETEWTGETEEVDWAESGATPAAEEAAASNW). The span at 222 to 244 (DVEEAPAADAETEWTGETEEVDW) shows a compositional bias: acidic residues. Residues 245 to 261 (AESGATPAAEEAAASNW) show a composition bias toward low complexity.

The protein belongs to the universal ribosomal protein uS2 family. As to quaternary structure, component of the small ribosomal subunit. Mature ribosomes consist of a small (40S) and a large (60S) subunit. The 40S subunit contains about 33 different proteins and 1 molecule of RNA (18S). The 60S subunit contains about 49 different proteins and 3 molecules of RNA (25S, 5.8S and 5S). Interacts with RPS21.

The protein resides in the cytoplasm. Required for the assembly and/or stability of the 40S ribosomal subunit. Required for the processing of the 20S rRNA-precursor to mature 18S rRNA in a late step of the maturation of 40S ribosomal subunits. This Debaryomyces hansenii (strain ATCC 36239 / CBS 767 / BCRC 21394 / JCM 1990 / NBRC 0083 / IGC 2968) (Yeast) protein is Small ribosomal subunit protein uS2.